The following is a 320-amino-acid chain: tRNA U34 carboxymethyltransferase (320 aa).

Carboxy-S-adenosyl-L-methionine-binding positions include K89, W103, K108, G128, D150–T152, I179–E180, M194, Y198, and R313.

The protein belongs to the class I-like SAM-binding methyltransferase superfamily. CmoB family. Homotetramer.

The enzyme catalyses carboxy-S-adenosyl-L-methionine + 5-hydroxyuridine(34) in tRNA = 5-carboxymethoxyuridine(34) in tRNA + S-adenosyl-L-homocysteine + H(+). Its function is as follows. Catalyzes carboxymethyl transfer from carboxy-S-adenosyl-L-methionine (Cx-SAM) to 5-hydroxyuridine (ho5U) to form 5-carboxymethoxyuridine (cmo5U) at position 34 in tRNAs. The protein is tRNA U34 carboxymethyltransferase of Actinobacillus pleuropneumoniae serotype 7 (strain AP76).